A 137-amino-acid polypeptide reads, in one-letter code: Basic phospholipase A2 PeBP(R)-I/II (137 aa).

Residues 1 to 16 (MRTLWIMAVLLLGVEG) form the signal peptide. 7 disulfide bridges follow: C42–C131, C44–C60, C59–C111, C65–C137, C66–C104, C73–C97, and C91–C102. Residue H63 is part of the active site. Residue D105 is part of the active site.

This sequence belongs to the phospholipase A2 family. Group II subfamily. R49 sub-subfamily. In terms of tissue distribution, expressed by the venom gland.

The protein resides in the secreted. The enzyme catalyses a 1,2-diacyl-sn-glycero-3-phosphocholine + H2O = a 1-acyl-sn-glycero-3-phosphocholine + a fatty acid + H(+). Functionally, snake venom phospholipases A2 that have myotoxic, and edema-inducing activity, as well as extremely weak lipolytic activity. PLA2 catalyzes the calcium-dependent hydrolysis of the 2-acyl groups in 3-sn-phosphoglycerides. This chain is Basic phospholipase A2 PeBP(R)-I/II, found in Protobothrops elegans (Elegant pitviper).